The following is an 899-amino-acid chain: Proline-rich transmembrane protein 4 (899 aa).

A signal peptide spans 1-23 (MARHGCLGLGLFCCVLFAATVGP). Disordered stretches follow at residues 110-152 (LTEW…RRST) and 295-340 (TVPI…PEAP). 5 helical membrane-spanning segments follow: residues 370–390 (VGAL…LLPW), 392–412 (CPPG…AGTT), 430–450 (ALAW…GLGL), 467–487 (LAAL…GSAA), and 500–520 (GLHA…SCWG). Residue serine 641 is modified to Phosphoserine. 2 disordered regions span residues 769-797 (TGGR…AWPA) and 839-869 (PSGS…ASEL). Low complexity predominate over residues 840–851 (SGSSPSLPASGS).

The protein localises to the membrane. This Homo sapiens (Human) protein is Proline-rich transmembrane protein 4 (PRRT4).